The primary structure comprises 689 residues: FACT complex subunit ssrp1-B (689 aa).

Disordered stretches follow at residues 434–565 (DNKS…KRAT) and 592–689 (KAGA…GESD). Residues 461–477 (EQDDDSDDESTDEDYDL) are compositionally biased toward acidic residues. Basic and acidic residues-rich tracts occupy residues 478–491 (DKDMKKQKNDKDSS), 523–532 (IEPKKKESKE), 538–563 (EKKEKPVKEKAVKKGKKTKDPNEPKR), and 601–628 (SADDKKEWNDKAAQDKARYEAEMKEYKK). The segment at residues 561–627 (PKRATTAYII…RYEAEMKEYK (67 aa)) is a DNA-binding region (HMG box). Residues 638-650 (GPSTKKSSDQSPG) show a composition bias toward polar residues.

This sequence belongs to the SSRP1 family. Component of the FACT complex, a stable heterodimer of hmg-3 and spt-16. The FACT complex may also include hmg-4 instead of hmg-3. As to expression, expressed in the germline.

It is found in the nucleus. The protein resides in the chromosome. In terms of biological role, component of the FACT complex, a general chromatin factor that acts to reorganize nucleosomes. The FACT complex is involved in multiple processes that require DNA as a template such as mRNA elongation, DNA replication and DNA repair. During transcription elongation the FACT complex acts as a histone chaperone that both destabilizes and restores nucleosomal structure. It facilitates the passage of RNA polymerase II and transcription by promoting the dissociation of one histone H2A-H2B dimer from the nucleosome, then subsequently promotes the reestablishment of the nucleosome following the passage of RNA polymerase II. Binds specifically to double-stranded DNA. In embryos, may function redundantly with hmg-4 to promote cell cycle progression and development of the anterior pharynx. In the germline, acts non-redundantly with hmg-4 to play a role in oocyte development. The polypeptide is FACT complex subunit ssrp1-B (Caenorhabditis elegans).